Here is a 153-residue protein sequence, read N- to C-terminus: Aspartate carbamoyltransferase regulatory chain (153 aa).

Zn(2+) contacts are provided by C110, C115, C138, and C141.

The protein belongs to the PyrI family. In terms of assembly, contains catalytic and regulatory chains. It depends on Zn(2+) as a cofactor.

Its function is as follows. Involved in allosteric regulation of aspartate carbamoyltransferase. The chain is Aspartate carbamoyltransferase regulatory chain from Bacteroides thetaiotaomicron (strain ATCC 29148 / DSM 2079 / JCM 5827 / CCUG 10774 / NCTC 10582 / VPI-5482 / E50).